The sequence spans 209 residues: Large ribosomal subunit protein uL3 (209 aa).

Positions 128–166 are disordered; the sequence is FGGGSRTHGQSDRLRAPGSVGGSSDPSRTFKGTRMAGRM.

It belongs to the universal ribosomal protein uL3 family. In terms of assembly, part of the 50S ribosomal subunit. Forms a cluster with proteins L14 and L19.

One of the primary rRNA binding proteins, it binds directly near the 3'-end of the 23S rRNA, where it nucleates assembly of the 50S subunit. In Chlorobaculum parvum (strain DSM 263 / NCIMB 8327) (Chlorobium vibrioforme subsp. thiosulfatophilum), this protein is Large ribosomal subunit protein uL3.